The sequence spans 256 residues: tRNA (guanine-N(1)-)-methyltransferase (256 aa).

Residues glycine 117 and leucine 137 to leucine 142 contribute to the S-adenosyl-L-methionine site.

It belongs to the RNA methyltransferase TrmD family. In terms of assembly, homodimer.

It localises to the cytoplasm. The enzyme catalyses guanosine(37) in tRNA + S-adenosyl-L-methionine = N(1)-methylguanosine(37) in tRNA + S-adenosyl-L-homocysteine + H(+). Its function is as follows. Specifically methylates guanosine-37 in various tRNAs. The polypeptide is tRNA (guanine-N(1)-)-methyltransferase (Methylibium petroleiphilum (strain ATCC BAA-1232 / LMG 22953 / PM1)).